The following is a 379-amino-acid chain: MSATLALTEQLIARASVTPDDQHCQQIMTERLAALGFECETIASHGVTNLWAVKRGTDGRDGKLLAFAGHTDVVPTGPLEQWTSPPFIPAHRDGKLYGRGAADMKTSLAAFVVASEEFVAAHPDHRGAIAFLITSDEEGPATDGTVKVVELLQARGERLDYCIVGEPTSTTELGDVVKNGRRGSMSGELVVKGVQGHIAYPHLAKNPIHLLAPALAELAAEQWDAGNEYFPPTTWQVSNLHAGTGATNVIPGHADLLFNFRFSTASTVEGLQARVHAILDKHGLEYTLKWSVSGLPFLTPRGELSGALEHAIRTETGITTELSTTGGTSDGRFIARICPQVIEFGPPNGSIHKIDEHIEVRFVDPLKNVYRRVLEQLIA.

His70 is a Zn(2+) binding site. Asp72 is a catalytic residue. Asp103 contributes to the Zn(2+) binding site. Glu137 functions as the Proton acceptor in the catalytic mechanism. Residues Glu138, Glu166, and His352 each contribute to the Zn(2+) site.

It belongs to the peptidase M20A family. DapE subfamily. In terms of assembly, homodimer. Zn(2+) serves as cofactor. It depends on Co(2+) as a cofactor.

It carries out the reaction N-succinyl-(2S,6S)-2,6-diaminopimelate + H2O = (2S,6S)-2,6-diaminopimelate + succinate. Its pathway is amino-acid biosynthesis; L-lysine biosynthesis via DAP pathway; LL-2,6-diaminopimelate from (S)-tetrahydrodipicolinate (succinylase route): step 3/3. Functionally, catalyzes the hydrolysis of N-succinyl-L,L-diaminopimelic acid (SDAP), forming succinate and LL-2,6-diaminopimelate (DAP), an intermediate involved in the bacterial biosynthesis of lysine and meso-diaminopimelic acid, an essential component of bacterial cell walls. This chain is Succinyl-diaminopimelate desuccinylase, found in Burkholderia cenocepacia (strain ATCC BAA-245 / DSM 16553 / LMG 16656 / NCTC 13227 / J2315 / CF5610) (Burkholderia cepacia (strain J2315)).